A 141-amino-acid chain; its full sequence is Large ribosomal subunit protein uL11 (141 aa).

Belongs to the universal ribosomal protein uL11 family. Part of the ribosomal stalk of the 50S ribosomal subunit. Interacts with L10 and the large rRNA to form the base of the stalk. L10 forms an elongated spine to which L12 dimers bind in a sequential fashion forming a multimeric L10(L12)X complex. In terms of processing, one or more lysine residues are methylated.

Its function is as follows. Forms part of the ribosomal stalk which helps the ribosome interact with GTP-bound translation factors. The sequence is that of Large ribosomal subunit protein uL11 from Kosmotoga olearia (strain ATCC BAA-1733 / DSM 21960 / TBF 19.5.1).